The following is a 192-amino-acid chain: ATP-dependent Clp protease proteolytic subunit 1 (192 aa).

Residue serine 92 is the Nucleophile of the active site. Histidine 117 is a catalytic residue.

This sequence belongs to the peptidase S14 family. Fourteen ClpP subunits assemble into 2 heptameric rings which stack back to back to give a disk-like structure with a central cavity, resembling the structure of eukaryotic proteasomes.

It is found in the cytoplasm. The enzyme catalyses Hydrolysis of proteins to small peptides in the presence of ATP and magnesium. alpha-casein is the usual test substrate. In the absence of ATP, only oligopeptides shorter than five residues are hydrolyzed (such as succinyl-Leu-Tyr-|-NHMec, and Leu-Tyr-Leu-|-Tyr-Trp, in which cleavage of the -Tyr-|-Leu- and -Tyr-|-Trp bonds also occurs).. Its function is as follows. Cleaves peptides in various proteins in a process that requires ATP hydrolysis. Has a chymotrypsin-like activity. Plays a major role in the degradation of misfolded proteins. This is ATP-dependent Clp protease proteolytic subunit 1 from Chlamydia abortus (strain DSM 27085 / S26/3) (Chlamydophila abortus).